A 223-amino-acid chain; its full sequence is Uracil-DNA glycosylase (223 aa).

Residue Asp67 is the Proton acceptor of the active site.

The protein belongs to the uracil-DNA glycosylase (UDG) superfamily. UNG family.

The protein localises to the cytoplasm. The enzyme catalyses Hydrolyzes single-stranded DNA or mismatched double-stranded DNA and polynucleotides, releasing free uracil.. Its function is as follows. Excises uracil residues from the DNA which can arise as a result of misincorporation of dUMP residues by DNA polymerase or due to deamination of cytosine. The protein is Uracil-DNA glycosylase of Borrelia turicatae (strain 91E135).